The primary structure comprises 459 residues: Vanillin aminotransferase (459 aa).

Pyridoxal 5'-phosphate-binding positions include 115-116 (GS) and Asp255. An N6-(pyridoxal phosphate)lysine modification is found at Lys284. 320 to 321 (FT) lines the pyridoxal 5'-phosphate pocket. A coiled-coil region spans residues 430 to 457 (LEELDELIRIYGKALKDTEKRVEELKSQ).

The protein belongs to the class-III pyridoxal-phosphate-dependent aminotransferase family. In terms of tissue distribution, confined to the placenta of green fruits at high levels. Barely detectable in the pericarp and seeds as well as in the placenta of mature fruits.

It carries out the reaction vanillin + L-alanine = vanillylamine + pyruvate. It participates in aromatic compound metabolism; phenylpropanoid biosynthesis. Involved in the biosynthesis of capsaicinoids natural products, pungent alkaloids synthesized from phenylpropanoid intermediates in the placental tissue of chili pepper fruit acting as repellant on herbivorous mammals and conferring spiciness to hot peppers. Can transfer an amine from vanillylamine to pyruvate forming vanillin and L-alanine. The chain is Vanillin aminotransferase from Capsicum annuum (Capsicum pepper).